A 213-amino-acid polypeptide reads, in one-letter code: MSGRERNGGRSAENNDKKERNERNGRNDRGGRNDRRNQQDERSQFIERVVTINRVSKVVKGGRRFSFTALVIVGDGQGMVGVGYGKAKEVPAAIQKGAEEARKNFFRVPMINGTITHPVQGEDAAGIVMMKPAAPGTGVIAGGAVRPVLECAGVQDILSKSLGSDNAINIVHATVAGLKQLVRPEEVAARRGKSLDEVAPAAMLRARAAGQGA.

A disordered region spans residues 1 to 41; it reads MSGRERNGGRSAENNDKKERNERNGRNDRGGRNDRRNQQDE. One can recognise an S5 DRBM domain in the interval 45–108; sequence FIERVVTINR…EEARKNFFRV (64 aa).

The protein belongs to the universal ribosomal protein uS5 family. Part of the 30S ribosomal subunit. Contacts proteins S4 and S8.

In terms of biological role, with S4 and S12 plays an important role in translational accuracy. Its function is as follows. Located at the back of the 30S subunit body where it stabilizes the conformation of the head with respect to the body. This chain is Small ribosomal subunit protein uS5, found in Corynebacterium jeikeium (strain K411).